We begin with the raw amino-acid sequence, 292 residues long: Hypersensitive-induced response protein 4 (292 aa).

G2 is lipidated: N-myristoyl glycine.

As to quaternary structure, self-interacts and forms heteromers. Interacts with NB-LRR class of R proteins before R proteins (e.g. RPS2 or RPM1) are activated by the effectors.

It is found in the cell membrane. This chain is Hypersensitive-induced response protein 4 (HIR4), found in Arabidopsis thaliana (Mouse-ear cress).